We begin with the raw amino-acid sequence, 32 residues long: U3-ctenitoxin-Pk1a (32 aa).

3 disulfides stabilise this stretch: C3-C17, C10-C21, and C16-C30.

It belongs to the neurotoxin 17 (21C2) family. Expressed by the venom gland.

It is found in the secreted. Its function is as follows. May act as a neurotoxin. This Phoneutria keyserlingi (Brazilian wandering spider) protein is U3-ctenitoxin-Pk1a.